We begin with the raw amino-acid sequence, 156 residues long: 17 kDa lipoprotein (156 aa).

An N-terminal signal peptide occupies residues 1–21 (MKGSVRALCAFLGVGALGSAL). The N-palmitoyl cysteine moiety is linked to residue Cys-22. Cys-22 carries S-diacylglycerol cysteine lipidation.

The protein resides in the cell membrane. The polypeptide is 17 kDa lipoprotein (tpp17) (Treponema pallidum (strain Nichols)).